A 394-amino-acid polypeptide reads, in one-letter code: Small RNA 2'-O-methyltransferase (394 aa).

Asp-78 and Ser-114 together coordinate S-adenosyl-L-methionine. Mg(2+) is bound by residues Glu-132, Glu-135, His-136, and His-181.

This sequence belongs to the methyltransferase superfamily. HEN1 family. The cofactor is Mg(2+).

The protein localises to the cytoplasm. The catalysed reaction is small RNA 3'-end nucleotide + S-adenosyl-L-methionine = small RNA 3'-end 2'-O-methylnucleotide + S-adenosyl-L-homocysteine + H(+). Methyltransferase that adds a 2'-O-methyl group at the 3'-end of piRNAs, a class of 24 to 30 nucleotide RNAs that are generated by a Dicer-independent mechanism and are primarily derived from transposons and other repeated sequence elements. This probably protects the 3'-end of piRNAs from uridylation activity and subsequent degradation. Stabilization of piRNAs is essential for gametogenesis. This Rattus norvegicus (Rat) protein is Small RNA 2'-O-methyltransferase (Henmt1).